Consider the following 425-residue polypeptide: GTPase Obg (425 aa).

The Obg domain maps to 1 to 158; sequence MFVDQVKVYV…RYIVMELKLI (158 aa). The interval 118-144 is disordered; that stretch reads KGGRGGRGNNRFANSSNPAPHISENGE. The region spanning 159 to 327 is the OBG-type G domain; the sequence is ADVGLVGYPS…LMYAIGDTLA (169 aa). ATP-binding positions include 165 to 172, 190 to 194, 211 to 214, 281 to 284, and 308 to 310; these read GYPSVGKS, FTTLT, DLPG, NKME, and SAA. Mg(2+)-binding residues include serine 172 and threonine 192. One can recognise an OCT domain in the interval 348–425; that stretch reads RAEKEPDAFE…IGKLEFDFVE (78 aa).

Belongs to the TRAFAC class OBG-HflX-like GTPase superfamily. OBG GTPase family. Monomer. Requires Mg(2+) as cofactor.

It localises to the cytoplasm. An essential GTPase which binds GTP, GDP and possibly (p)ppGpp with moderate affinity, with high nucleotide exchange rates and a fairly low GTP hydrolysis rate. Plays a role in control of the cell cycle, stress response, ribosome biogenesis and in those bacteria that undergo differentiation, in morphogenesis control. The chain is GTPase Obg from Brevibacillus brevis (strain 47 / JCM 6285 / NBRC 100599).